Consider the following 289-residue polypeptide: Acetyl-coenzyme A carboxylase carboxyl transferase subunit beta (289 aa).

The 263-residue stretch at 27–289 (LWSKCPSCES…SFMRVPAGAA (263 aa)) folds into the CoA carboxyltransferase N-terminal domain. Zn(2+)-binding residues include C31, C34, C50, and C53. The C4-type zinc finger occupies 31-53 (CPSCESVLYRTDLESNSEVCPKC).

This sequence belongs to the AccD/PCCB family. As to quaternary structure, acetyl-CoA carboxylase is a heterohexamer composed of biotin carboxyl carrier protein (AccB), biotin carboxylase (AccC) and two subunits each of ACCase subunit alpha (AccA) and ACCase subunit beta (AccD). Requires Zn(2+) as cofactor.

It localises to the cytoplasm. It carries out the reaction N(6)-carboxybiotinyl-L-lysyl-[protein] + acetyl-CoA = N(6)-biotinyl-L-lysyl-[protein] + malonyl-CoA. Its pathway is lipid metabolism; malonyl-CoA biosynthesis; malonyl-CoA from acetyl-CoA: step 1/1. Its function is as follows. Component of the acetyl coenzyme A carboxylase (ACC) complex. Biotin carboxylase (BC) catalyzes the carboxylation of biotin on its carrier protein (BCCP) and then the CO(2) group is transferred by the transcarboxylase to acetyl-CoA to form malonyl-CoA. The sequence is that of Acetyl-coenzyme A carboxylase carboxyl transferase subunit beta from Methylobacillus flagellatus (strain ATCC 51484 / DSM 6875 / VKM B-1610 / KT).